The sequence spans 259 residues: Adenosylcobinamide-GDP ribazoletransferase (259 aa).

A run of 6 helical transmembrane segments spans residues 9 to 29 (NLFFIAMGFFTRIPMPKWIEV), 43 to 63 (LVGLLVGAISAAVYSLMLYWV), 64 to 84 (SPSVAIVFAMITSVLVTGGFH), 118 to 138 (ALALVLALLLKWQLLTELALF), 143 to 163 (VSLALIVGHCLSRVVAASFIF), and 196 to 216 (VLALLLVGLVPALVLITGLVI).

The protein belongs to the CobS family. Requires Mg(2+) as cofactor.

It localises to the cell inner membrane. The enzyme catalyses alpha-ribazole + adenosylcob(III)inamide-GDP = adenosylcob(III)alamin + GMP + H(+). It catalyses the reaction alpha-ribazole 5'-phosphate + adenosylcob(III)inamide-GDP = adenosylcob(III)alamin 5'-phosphate + GMP + H(+). It participates in cofactor biosynthesis; adenosylcobalamin biosynthesis; adenosylcobalamin from cob(II)yrinate a,c-diamide: step 7/7. Its function is as follows. Joins adenosylcobinamide-GDP and alpha-ribazole to generate adenosylcobalamin (Ado-cobalamin). Also synthesizes adenosylcobalamin 5'-phosphate from adenosylcobinamide-GDP and alpha-ribazole 5'-phosphate. The polypeptide is Adenosylcobinamide-GDP ribazoletransferase (Shewanella halifaxensis (strain HAW-EB4)).